The sequence spans 152 residues: Protein Smg homolog (152 aa).

Belongs to the Smg family.

This is Protein Smg homolog from Nitrosomonas eutropha (strain DSM 101675 / C91 / Nm57).